We begin with the raw amino-acid sequence, 161 residues long: UPF0262 protein SPOA0072 (161 aa).

The disordered stretch occupies residues 1 to 21 (MTMSRISHIELDDSNLPPPTP).

Belongs to the UPF0262 family.

The polypeptide is UPF0262 protein SPOA0072 (Ruegeria pomeroyi (strain ATCC 700808 / DSM 15171 / DSS-3) (Silicibacter pomeroyi)).